The primary structure comprises 554 residues: Dihydroxy-acid dehydratase (554 aa).

Residue C48 participates in [2Fe-2S] cluster binding. D80 is a Mg(2+) binding site. C121 is a [2Fe-2S] cluster binding site. Residues D122 and K123 each coordinate Mg(2+). K123 is subject to N6-carboxylysine. C193 is a [2Fe-2S] cluster binding site. Position 444 (E444) interacts with Mg(2+). S470 (proton acceptor) is an active-site residue.

Belongs to the IlvD/Edd family. Homodimer. [2Fe-2S] cluster is required as a cofactor. It depends on Mg(2+) as a cofactor.

It carries out the reaction (2R)-2,3-dihydroxy-3-methylbutanoate = 3-methyl-2-oxobutanoate + H2O. The enzyme catalyses (2R,3R)-2,3-dihydroxy-3-methylpentanoate = (S)-3-methyl-2-oxopentanoate + H2O. It functions in the pathway amino-acid biosynthesis; L-isoleucine biosynthesis; L-isoleucine from 2-oxobutanoate: step 3/4. Its pathway is amino-acid biosynthesis; L-valine biosynthesis; L-valine from pyruvate: step 3/4. In terms of biological role, functions in the biosynthesis of branched-chain amino acids. Catalyzes the dehydration of (2R,3R)-2,3-dihydroxy-3-methylpentanoate (2,3-dihydroxy-3-methylvalerate) into 2-oxo-3-methylpentanoate (2-oxo-3-methylvalerate) and of (2R)-2,3-dihydroxy-3-methylbutanoate (2,3-dihydroxyisovalerate) into 2-oxo-3-methylbutanoate (2-oxoisovalerate), the penultimate precursor to L-isoleucine and L-valine, respectively. The sequence is that of Dihydroxy-acid dehydratase from Tremblaya princeps.